The primary structure comprises 419 residues: L-rhamnose isomerase (419 aa).

Mn(2+)-binding residues include His262, Asp294, and Asp296.

The protein belongs to the rhamnose isomerase family. In terms of assembly, homotetramer. Mn(2+) is required as a cofactor.

Its subcellular location is the cytoplasm. It carries out the reaction L-rhamnopyranose = L-rhamnulose. It functions in the pathway carbohydrate degradation; L-rhamnose degradation; glycerone phosphate from L-rhamnose: step 1/3. Functionally, catalyzes the interconversion of L-rhamnose and L-rhamnulose. The protein is L-rhamnose isomerase of Salmonella choleraesuis (strain SC-B67).